A 200-amino-acid polypeptide reads, in one-letter code: Recombination protein RecR (200 aa).

The segment at 59–74 (CEICGNIDTRSPCTVC) adopts a C4-type zinc-finger fold. A Toprim domain is found at 82–177 (SIIVVVADVA…KVTRLAHGVP (96 aa)).

The protein belongs to the RecR family.

Its function is as follows. May play a role in DNA repair. It seems to be involved in an RecBC-independent recombinational process of DNA repair. It may act with RecF and RecO. This is Recombination protein RecR from Nitrobacter hamburgensis (strain DSM 10229 / NCIMB 13809 / X14).